Consider the following 35-residue polypeptide: Photosystem II reaction center protein T (35 aa).

A helical transmembrane segment spans residues 3–23 (ALVYTFLLVSTLGIIFFAIFF).

This sequence belongs to the PsbT family. In terms of assembly, PSII is composed of 1 copy each of membrane proteins PsbA, PsbB, PsbC, PsbD, PsbE, PsbF, PsbH, PsbI, PsbJ, PsbK, PsbL, PsbM, PsbT, PsbY, PsbZ, Psb30/Ycf12, at least 3 peripheral proteins of the oxygen-evolving complex and a large number of cofactors. It forms dimeric complexes.

Its subcellular location is the plastid. It is found in the chloroplast thylakoid membrane. Found at the monomer-monomer interface of the photosystem II (PS II) dimer, plays a role in assembly and dimerization of PSII. PSII is a light-driven water plastoquinone oxidoreductase, using light energy to abstract electrons from H(2)O, generating a proton gradient subsequently used for ATP formation. This chain is Photosystem II reaction center protein T, found in Bassia hyssopifolia (Fivehorn smotherweed).